A 231-amino-acid chain; its full sequence is MMLSCLFLLKALLALGSLESWITAGEHAKEGECPPHKNPCKELCQGDELCPAEQKCCTTGCGRICRDIPKGRKRDCPRVIRKQSCLKRCITDETCPGVKKCCTLGCNKSCVVPISKQKLAEFGGECPADPLPCEELCDGDASCPQGHKCCSTGCGRTCLGDIEGGRGGDCPKVLVGLCIVGCVMDENCQAGEKCCKSGCGRFCVPPVLPPKLTMNPNWTVRSDSELEIPVP.

The first 24 residues, 1–24 (MMLSCLFLLKALLALGSLESWITA), serve as a signal peptide directing secretion. WAP domains lie at 26-68 (EHAK…CRDI), 69-114 (PKGR…VVPI), 119-162 (LAEF…LGDI), and 163-207 (EGGR…VPPV). 16 cysteine pairs are disulfide-bonded: Cys-33–Cys-57, Cys-40–Cys-61, Cys-44–Cys-56, Cys-50–Cys-65, Cys-76–Cys-102, Cys-85–Cys-106, Cys-89–Cys-101, Cys-95–Cys-110, Cys-126–Cys-150, Cys-133–Cys-154, Cys-137–Cys-149, Cys-143–Cys-158, Cys-170–Cys-195, Cys-178–Cys-199, Cys-182–Cys-194, and Cys-188–Cys-203. N-linked (GlcNAc...) asparagine glycosylation is present at Asn-107. Asn-217 is a glycosylation site (N-linked (GlcNAc...) asparagine).

Ubiquitously expressed.

It is found in the secreted. The sequence is that of WAP four-disulfide core domain protein 3 (WFDC3) from Homo sapiens (Human).